A 615-amino-acid polypeptide reads, in one-letter code: Sodium-dependent neutral amino acid transporter B(0)AT3 (615 aa).

The Cytoplasmic segment spans residues 1–26 (MAQASGMDPLVDIEDERPKWDNKLQY). Residues 27–47 (LLSCIGFAVGLGNIWRFPYLC) form a helical membrane-spanning segment. Residues 48–52 (QTHGG) are Extracellular-facing. Residues 53-73 (GAFLIPYFIALVFEGIPLFYI) traverse the membrane as a helical segment. Residues 74-105 (ELAIGQRLRRGSIGVWKTISPYLGGVGLGCFS) lie on the Cytoplasmic side of the membrane. Residues 106–126 (VSFLVSLYYNTVLLWVLWFFL) form a helical membrane-spanning segment. The Extracellular segment spans residues 127–177 (NSFQHPLPWSTCPLDLNRTGFVQECQSSGTVSYFWYRQTLNITSDISNTGT). 2 N-linked (GlcNAc...) asparagine glycosylation sites follow: asparagine 143 and asparagine 167. The helical transmembrane segment at 178–198 (IQWKLFLCLVACWSTVYLCVI) threads the bilayer. At 199-206 (RGIESTGK) the chain is on the cytoplasmic side. The chain crosses the membrane as a helical span at residues 207–227 (VIYFTALFPYLVLTIFLIRGL). Over 228–255 (TLPGATEGLIYLFTPNMKTLQNPRVWLD) the chain is Extracellular. Residues 256–276 (AATQIFFSLSLAFGGHIAFAS) form a helical membrane-spanning segment. The Cytoplasmic portion of the chain corresponds to 277–288 (YNPPRNNCEKDA). A helical membrane pass occupies residues 289 to 309 (VIIALVNSMTSLYASIAIFSV). The Extracellular segment spans residues 310–397 (MGFKASNDYG…FTEAVLHMPG (88 aa)). A glycan (N-linked (GlcNAc...) asparagine) is linked at asparagine 353. Residues 398 to 418 (ASVWSVLFFGMLFTLGLSSMF) traverse the membrane as a helical segment. Over 419–441 (GNMEGVITPLLDMGILPKGIPKE) the chain is Cytoplasmic. Residues 442–462 (VMTGVICFACFLSAICFTLQS) form a helical membrane-spanning segment. At 463-472 (GGYWLEIFDS) the chain is on the extracellular side. Residues 473 to 493 (FAASLNLIIFAFMEVVGVIHI) form a helical membrane-spanning segment. Residues 494–520 (YGMKRFCDDIEWMTGRRPGLYWQVTWR) are Cytoplasmic-facing. Residues 521–541 (VVSPMLLFGIFLSYIVLLIQT) traverse the membrane as a helical segment. Topologically, residues 542–570 (PPSYKAWNPQYEHFPSREEKFYPGWVQVT) are extracellular. Residues 571–591 (CVLLSFLPSLWVPGVALAQLL) traverse the membrane as a helical segment. Over 592 to 615 (SQYKQRWKATHLESGLKLQESRGC) the chain is Cytoplasmic.

It belongs to the sodium:neurotransmitter symporter (SNF) (TC 2.A.22) family. SLC6A18 subfamily. As to quaternary structure, interacts with CLTRN; this interaction regulates the trafficking of SLC6A18 to the cell membrane and its activity. As to expression, expressed predominantly in kidney.

The protein localises to the apical cell membrane. It localises to the cell membrane. It catalyses the reaction L-alanine(out) + chloride(out) + 2 Na(+)(out) = L-alanine(in) + chloride(in) + 2 Na(+)(in). The catalysed reaction is glycine(out) + chloride(out) + 2 Na(+)(out) = glycine(in) + chloride(in) + 2 Na(+)(in). It carries out the reaction L-methionine(out) + chloride(out) + 2 Na(+)(out) = L-methionine(in) + chloride(in) + 2 Na(+)(in). The enzyme catalyses L-valine(out) + chloride(out) + 2 Na(+)(out) = L-valine(in) + chloride(in) + 2 Na(+)(in). It catalyses the reaction L-isoleucine(out) + chloride(out) + 2 Na(+)(out) = L-isoleucine(in) + chloride(in) + 2 Na(+)(in). The catalysed reaction is L-serine(out) + chloride(out) + 2 Na(+)(out) = L-serine(in) + chloride(in) + 2 Na(+)(in). It carries out the reaction L-leucine(out) + chloride(out) + 2 Na(+)(out) = L-leucine(in) + chloride(in) + 2 Na(+)(in). In terms of biological role, symporter that transports one amino acid molecule together with two sodium and one chloride ions in kidneys and plays a role in the neutral amino acids reabsorption. Preferentially transports neutral amino acids such as L-glycine and L-alanine but also other neutral amino acids. Required CLTRN for cell surface expression and for its amino acid transporter activity. The transport mechanism is pH-independent. In Mus musculus (Mouse), this protein is Sodium-dependent neutral amino acid transporter B(0)AT3.